The following is a 189-amino-acid chain: MKHDEYSINKEDVMIPPLHPVVIGRIIGAYGILGWVRILSFTEKNDNIFYYSPYFIIVQSTWKEIFLDKWKLIGKRYIVKIRGVSNRNSAQSLSRCNIIIDETQFPCINDDEYYWKDLIGCVVITVQGVLLGDIISIIETTANDVLVVKMCQNNLYKIKNCLIPFLIKRVIKNINLVTRTVTVDWDPNF.

The PRC barrel domain maps to 110–189 (DDEYYWKDLI…TVTVDWDPNF (80 aa)).

The protein belongs to the RimM family. Binds ribosomal protein uS19.

It is found in the cytoplasm. An accessory protein needed during the final step in the assembly of 30S ribosomal subunit, possibly for assembly of the head region. Essential for efficient processing of 16S rRNA. May be needed both before and after RbfA during the maturation of 16S rRNA. It has affinity for free ribosomal 30S subunits but not for 70S ribosomes. In Blochmanniella pennsylvanica (strain BPEN), this protein is Ribosome maturation factor RimM.